Consider the following 890-residue polypeptide: Exo-beta-D-glucosaminidase (890 aa).

Residues 1–18 (MIAKAVAALLLGSGLASA) form the signal peptide. Residues 19–26 (AGTPLTSK) constitute a propeptide that is removed on maturation. N-linked (GlcNAc...) asparagine glycosylation is found at Asn-194, Asn-334, and Asn-438. The Proton donor role is filled by Asp-462. The Nucleophile role is filled by Glu-537. 2 N-linked (GlcNAc...) asparagine glycosylation sites follow: Asn-576 and Asn-687.

It belongs to the glycosyl hydrolase 2 family. In terms of assembly, monomer.

The protein resides in the secreted. It localises to the extracellular space. The catalysed reaction is Hydrolysis of chitosan or chitosan oligosaccharides to remove successive D-glucosamine residues from the non-reducing termini.. In terms of biological role, hydrolyzes chitosan and chitooligosaccharides with retention of anomeric configuration. Has no activity against beta-D-galactoside, beta-D-glucuronide, beta-D-mannoside, chitin, glycol chitosan, cellulose, N,N'-diacetylchitibiose and pNP-GlcNAc. This chain is Exo-beta-D-glucosaminidase, found in Hypocrea virens (Gliocladium virens).